Consider the following 135-residue polypeptide: Small ribosomal subunit protein uS12 (135 aa).

Asp-89 carries the 3-methylthioaspartic acid modification. The tract at residues 114 to 135 (RSRYGAKKGAAKQAAAAKSKKK) is disordered. Low complexity predominate over residues 124-135 (AKQAAAAKSKKK).

The protein belongs to the universal ribosomal protein uS12 family. As to quaternary structure, part of the 30S ribosomal subunit. Contacts proteins S8 and S17. May interact with IF1 in the 30S initiation complex.

Functionally, with S4 and S5 plays an important role in translational accuracy. In terms of biological role, interacts with and stabilizes bases of the 16S rRNA that are involved in tRNA selection in the A site and with the mRNA backbone. Located at the interface of the 30S and 50S subunits, it traverses the body of the 30S subunit contacting proteins on the other side and probably holding the rRNA structure together. The combined cluster of proteins S8, S12 and S17 appears to hold together the shoulder and platform of the 30S subunit. The sequence is that of Small ribosomal subunit protein uS12 from Amoebophilus asiaticus (strain 5a2).